Consider the following 56-residue polypeptide: Small ribosomal subunit protein uS14 (56 aa).

Ser9 is modified (phosphoserine). The residue at position 12 (Arg12) is an Omega-N-methylarginine. The Zn(2+) site is built by Cys21, Cys24, Cys39, and Cys42. Lys48 carries the post-translational modification N6-acetyllysine.

Belongs to the universal ribosomal protein uS14 family. In terms of assembly, component of the 40S small ribosomal subunit. It depends on Zn(2+) as a cofactor.

It is found in the cytoplasm. Its subcellular location is the cytosol. The protein localises to the rough endoplasmic reticulum. Functionally, component of the small ribosomal subunit. The ribosome is a large ribonucleoprotein complex responsible for the synthesis of proteins in the cell. The protein is Small ribosomal subunit protein uS14 (Rps29) of Mus musculus (Mouse).